We begin with the raw amino-acid sequence, 1203 residues long: Protein patched homolog 2 (1203 aa).

Residues 1–57 (MTRSPPLRELPPSYTPPARTAAPQILAGSLKAPLWLRAYFQGLLFSLGCGIQRHCGK) are Cytoplasmic-facing. The helical transmembrane segment at 58 to 78 (VLFLGLLAFGALALGLRMAII) threads the bilayer. Over 79–392 (ETNLEQLWVE…LDDILHAFSE (314 aa)) the chain is Extracellular. N370 carries N-linked (GlcNAc...) asparagine glycosylation. A helical membrane pass occupies residues 393 to 413 (VSAARVVGGYLLMLAYACVTM). One can recognise an SSD domain in the interval 394–552 (SAARVVGGYL…MLVFPAILSL (159 aa)). Topologically, residues 414-428 (LRWDCAQSQGSVGLA) are cytoplasmic. The helical transmembrane segment at 429 to 449 (GVLLVALAVASGLGLCALLGI) threads the bilayer. The Extracellular portion of the chain corresponds to 450–457 (TFNAATTQ). The helical transmembrane segment at 458–478 (VLPFLALGIGVDDVFLLAHAF) threads the bilayer. The Cytoplasmic portion of the chain corresponds to 479–501 (TEALPGTPLQERMGECLQRTGTS). The chain crosses the membrane as a helical span at residues 502 to 522 (VVLTSINNMAAFLMAALVPIP). At 523-531 (ALRAFSLQA) the chain is on the extracellular side. A helical transmembrane segment spans residues 532–552 (AIVVGCTFVAVMLVFPAILSL). Topologically, residues 553 to 686 (DLRRRHCQRL…APLLLQSHAK (134 aa)) are cytoplasmic. Residues 687-707 (AIVLVLFGALLGLSLYGATLV) form a helical membrane-spanning segment. The Extracellular segment spans residues 708–963 (QDGLALTDVV…WEQYLGLRRC (256 aa)). N812 is a glycosylation site (N-linked (GlcNAc...) asparagine). The chain crosses the membrane as a helical span at residues 964 to 984 (FLLAVCILLVCTFLVCALLLL). The Cytoplasmic segment spans residues 985–991 (NPWTAGL). Residues 992-1012 (IVLVLAMMTVELFGIMGFLGI) traverse the membrane as a helical segment. Residue K1013 is a topological domain, extracellular. Residues 1014-1034 (LSAIPVVILVASVGIGVEFTV) form a helical membrane-spanning segment. At 1035–1064 (HVALGFLTTQGSRNLRAAHALEHTFAPVTD) the chain is on the cytoplasmic side. The helical transmembrane segment at 1065–1085 (GAISTLLGLLMLAGSHFDFIV) threads the bilayer. The Extracellular portion of the chain corresponds to 1086–1093 (RYFFAALT). The helical transmembrane segment at 1094–1114 (VLTLLGLLHGLVLLPVLLSIL) threads the bilayer. Residues 1115 to 1203 (GPPPEVIQMY…SSRGPGPATG (89 aa)) lie on the Cytoplasmic side of the membrane. The interval 1171-1203 (GAYIHPAPDEPPWSPAATSSGNLSSRGPGPATG) is disordered. Over residues 1186-1195 (AATSSGNLSS) the composition is skewed to polar residues.

Belongs to the patched family.

The protein resides in the membrane. Plays a role in the control of cellular growth. May have a role in epidermal development. May act as a receptor for Sonic hedgehog (SHH). The polypeptide is Protein patched homolog 2 (PTCH2) (Homo sapiens (Human)).